A 1350-amino-acid chain; its full sequence is ABC transporter C family member 13 (1350 aa).

One can recognise an ABC transmembrane type-1 1 domain in the interval 107–390 (NKKSIFIVIL…LPEAIHNLLG (284 aa)). A run of 4 helical transmembrane segments spans residues 111–131 (IFIV…LKYF), 143–163 (TFLT…SYTL), 215–235 (IGLF…FPIQ), and 240–260 (LALL…VMII). Residues 462–481 (EKSEEEYETTTTTTDDNNNN) form a disordered region. Over residues 470–481 (TTTTTTDDNNNN) the composition is skewed to low complexity. The ABC transporter 1 domain occupies 473-693 (TTTDDNNNNN…IDFESIMKTK (221 aa)). 505 to 512 (GVVGSGKT) lines the ATP pocket. In terms of domain architecture, ABC transmembrane type-1 2 spans 774–1061 (KHGSSTFFFI…FVELEVKMNS (288 aa)). 6 helical membrane-spanning segments follow: residues 776–796 (GSST…QAIF), 816–836 (DSFY…TLVI), 887–907 (IDLL…TVVF), 909–929 (ICVM…LIIV), 1003–1023 (IGVR…FFSL), and 1029–1049 (GFSV…NWAV). The region spanning 1103-1337 (IEFRDVEIRY…KNSKFSKLVK (235 aa)) is the ABC transporter 2 domain. Residue 1137-1144 (GRTGAGKS) participates in ATP binding.

It belongs to the ABC transporter superfamily. ABCC family. Conjugate transporter (TC 3.A.1.208) subfamily.

The protein localises to the membrane. The polypeptide is ABC transporter C family member 13 (abcC13) (Dictyostelium discoideum (Social amoeba)).